Here is a 371-residue protein sequence, read N- to C-terminus: Probable beta-1,3-galactosyltransferase 12 (371 aa).

A disordered region spans residues 1–36 (MPLFSHRFTTASSSSPASPSYYNKPSSKTHKPNSSS). Low complexity predominate over residues 11-36 (ASSSSPASPSYYNKPSSKTHKPNSSS). A helical; Signal-anchor for type II membrane protein transmembrane segment spans residues 46–66 (VAIIFFSLVSVFIGVAGTIFA). An N-linked (GlcNAc...) asparagine glycan is attached at Asn291.

The protein belongs to the glycosyltransferase 31 family. Mn(2+) serves as cofactor.

It is found in the golgi apparatus membrane. Its pathway is protein modification; protein glycosylation. Beta-1,3-galactosyltransferase that transfers galactose from UDP-galactose to substrates with a terminal glycosyl residue. This Arabidopsis thaliana (Mouse-ear cress) protein is Probable beta-1,3-galactosyltransferase 12 (B3GALT12).